Reading from the N-terminus, the 693-residue chain is MKHSVSFTYGQHQVTLETGEIARQADGAVIVNMDDTIVLVTVVANKTVAEGQDFFPLTVDYQEKNYAAGKIPGGFFKREGRPSEEETLISRLIDRPIRPLFADGFLNEVQIIATVLSYNPEVSPDIPSIIGASAALKLSGLPFNGPIAAARVGYVNDAYVLNPSPKALKNSRLDLVVAGTESAVLMVESEADQLSEAVMLEAVMFGHRQQQVVIKSINELAAQAAKPAWAWQSPARDEQLDTEVKNHFEERLVAAYQIAHKQTRQETVAQIHADAVALLGIQNNAHGWEETLVNEYVHHLAYRIVRDRILKKQPRIDGRDTKTVRPITIHTSVLPRAHGSALFTRGETQALVVATLGTGRDAQLLDTLDGEVRDNFMLHYNFLPFSVGEIGRIGSPKRREIGHGRLARRGLSAVLPLEEDFPYTIRVVSEITESNGSSSMASVCGSSLALMDAGVPVQTPVAGIAMGLIKEGDEFAILTDILGDEDHLGDMDFKVAGSATGVTALQMDIKINGITEEIMRQALSQAHEGRLHILEVMNQAIAAPRAELSDYAPRFSSMRIDTEKIKDVIGKGGATIRSITEQTGTTIEIEDDGSVKIAATDKAAAANARRLIEEIVAEPEIGRIYDAKVTKITDFGAFLQFLPGKEGLVHISQIADYRVNDVRDELTEGQEVKVKLLEIDRQGRVRLSIKEAK.

Asp486 and Asp492 together coordinate Mg(2+). One can recognise a KH domain in the interval 553-612 (PRFSSMRIDTEKIKDVIGKGGATIRSITEQTGTTIEIEDDGSVKIAATDKAAAANARRLI). The region spanning 622 to 690 (GRIYDAKVTK…RQGRVRLSIK (69 aa)) is the S1 motif domain.

Belongs to the polyribonucleotide nucleotidyltransferase family. As to quaternary structure, component of the RNA degradosome, which is a multiprotein complex involved in RNA processing and mRNA degradation. It depends on Mg(2+) as a cofactor.

The protein localises to the cytoplasm. The enzyme catalyses RNA(n+1) + phosphate = RNA(n) + a ribonucleoside 5'-diphosphate. Its function is as follows. Involved in mRNA degradation. Catalyzes the phosphorolysis of single-stranded polyribonucleotides processively in the 3'- to 5'-direction. The sequence is that of Polyribonucleotide nucleotidyltransferase from Dichelobacter nodosus (strain VCS1703A).